The sequence spans 110 residues: UPF0060 membrane protein AHA_2410 (110 aa).

4 helical membrane passes run 8–28 (GLFL…YLWL), 33–53 (SVWL…LLSL), 63–83 (AAYG…VDGI), and 87–107 (LWDL…MFAP).

The protein belongs to the UPF0060 family.

The protein resides in the cell inner membrane. In Aeromonas hydrophila subsp. hydrophila (strain ATCC 7966 / DSM 30187 / BCRC 13018 / CCUG 14551 / JCM 1027 / KCTC 2358 / NCIMB 9240 / NCTC 8049), this protein is UPF0060 membrane protein AHA_2410.